Consider the following 531-residue polypeptide: MASSPVAPVVLVILDGWGYREETYGNAIASAYTPVIDSLWQAYPHTLIHTSGKAVGLPKGQMGNSEVGHLNIGAGRIVPQELVRISDAVEEGSLFSNPVLVRLCQTVKERNGKLHFIGLCSAGGVHSHIDHLYGLVELAKRHGLPACIHVITDGRDTPPRDAAGVLEELEQRLKTSGCGRIVTVSGRYYAMDRDRRWERTEAAYRVMTSNEHIQPLRAVDVARQSYAQDIGDEFIVPTRIAAGAVEPGDGVVFFNFRPDRARQLTQAFIDPNFSGFERALITPLDFVTFTQYDASFNCGVAFPPQNLSHILGEVIAEHGLKQLRAAETEKYAHVTYFFNGGLEEPFPGEDRILIPSPMVTTYDQAPAMSALAVTQAVKKAIEKQEYALVVVNFANSDMVGHTGKLAATIQAIETVDRCVGVLVEAATKVGGTLLITADHGNAEYMIDEDGNPWTAHTTNPVPFILVEGEKRKVPGHGGHVILRKDGCLADIAPTILEILELPQPLEMTGRSLIVSAPYEMRLNRTPVSLKI.

Asp15 and Ser65 together coordinate Mn(2+). The active-site Phosphoserine intermediate is the Ser65. Residues His126, Arg155–Asp156, Arg187, Arg193, Arg257–Arg260, and Lys330 contribute to the substrate site. 5 residues coordinate Mn(2+): Asp397, His401, Asp438, His439, and His456.

It belongs to the BPG-independent phosphoglycerate mutase family. In terms of assembly, monomer. Requires Mn(2+) as cofactor.

It catalyses the reaction (2R)-2-phosphoglycerate = (2R)-3-phosphoglycerate. Its pathway is carbohydrate degradation; glycolysis; pyruvate from D-glyceraldehyde 3-phosphate: step 3/5. Catalyzes the interconversion of 2-phosphoglycerate and 3-phosphoglycerate. The sequence is that of 2,3-bisphosphoglycerate-independent phosphoglycerate mutase from Thermosynechococcus vestitus (strain NIES-2133 / IAM M-273 / BP-1).